Reading from the N-terminus, the 354-residue chain is Trans-L-3-hydroxyproline dehydratase (354 aa).

Residue cysteine 104 is the Proton acceptor of the active site. Residues glycine 105 to histidine 106, aspartate 269, and glycine 274 to serine 275 each bind substrate.

It belongs to the proline racemase family. Homodimer.

The enzyme catalyses trans-3-hydroxy-L-proline = 1-pyrroline-2-carboxylate + H2O. Functionally, catalyzes the dehydration of trans-3-hydroxy-L-proline to Delta(1)-pyrroline-2-carboxylate (Pyr2C). This is Trans-L-3-hydroxyproline dehydratase (L3HYPDH) from Bos taurus (Bovine).